Reading from the N-terminus, the 339-residue chain is Glycerol-3-phosphate dehydrogenase [NAD(P)+] (339 aa).

The NADPH site is built by serine 11, tryptophan 12, and lysine 109. Sn-glycerol 3-phosphate is bound by residues lysine 109, glycine 140, and serine 142. Alanine 144 is a binding site for NADPH. Residues lysine 195, aspartate 249, serine 259, arginine 260, and asparagine 261 each contribute to the sn-glycerol 3-phosphate site. The Proton acceptor role is filled by lysine 195. Position 260 (arginine 260) interacts with NADPH. NADPH is bound by residues valine 284 and glutamate 286.

It belongs to the NAD-dependent glycerol-3-phosphate dehydrogenase family.

The protein resides in the cytoplasm. The catalysed reaction is sn-glycerol 3-phosphate + NAD(+) = dihydroxyacetone phosphate + NADH + H(+). The enzyme catalyses sn-glycerol 3-phosphate + NADP(+) = dihydroxyacetone phosphate + NADPH + H(+). Its pathway is membrane lipid metabolism; glycerophospholipid metabolism. Its function is as follows. Catalyzes the reduction of the glycolytic intermediate dihydroxyacetone phosphate (DHAP) to sn-glycerol 3-phosphate (G3P), the key precursor for phospholipid synthesis. This chain is Glycerol-3-phosphate dehydrogenase [NAD(P)+], found in Lactobacillus helveticus (strain DPC 4571).